Here is a 358-residue protein sequence, read N- to C-terminus: Methylthioribose-1-phosphate isomerase (358 aa).

Residues Arg-54–Ala-56, Arg-96, and Gln-205 each bind substrate. The active-site Proton donor is the Asp-246. A substrate-binding site is contributed by Gly-256–Lys-257.

It belongs to the eIF-2B alpha/beta/delta subunits family. MtnA subfamily.

The catalysed reaction is 5-(methylsulfanyl)-alpha-D-ribose 1-phosphate = 5-(methylsulfanyl)-D-ribulose 1-phosphate. The protein operates within amino-acid biosynthesis; L-methionine biosynthesis via salvage pathway; L-methionine from S-methyl-5-thio-alpha-D-ribose 1-phosphate: step 1/6. In terms of biological role, catalyzes the interconversion of methylthioribose-1-phosphate (MTR-1-P) into methylthioribulose-1-phosphate (MTRu-1-P). The chain is Methylthioribose-1-phosphate isomerase from Pseudomonas putida (strain ATCC 47054 / DSM 6125 / CFBP 8728 / NCIMB 11950 / KT2440).